The sequence spans 411 residues: Mannan endo-1,4-beta-mannosidase 1 (411 aa).

Residues 1–17 (MLNILPFFLFFLPFLIG) form the signal peptide. Asn-33 carries an N-linked (GlcNAc...) asparagine glycan. Substrate-binding residues include Trp-87 and Asn-197. Glu-198 functions as the Proton donor in the catalytic mechanism. Asn-202 is a glycosylation site (N-linked (GlcNAc...) asparagine). A substrate-binding site is contributed by Tyr-277. Glu-319 functions as the Nucleophile in the catalytic mechanism. Residue Trp-361 participates in substrate binding. N-linked (GlcNAc...) asparagine glycans are attached at residues Asn-366 and Asn-384.

This sequence belongs to the glycosyl hydrolase 5 (cellulase A) family. In terms of tissue distribution, expressed in roots, stems and flowers.

It localises to the secreted. It catalyses the reaction Random hydrolysis of (1-&gt;4)-beta-D-mannosidic linkages in mannans, galactomannans and glucomannans.. This chain is Mannan endo-1,4-beta-mannosidase 1 (MAN1), found in Arabidopsis thaliana (Mouse-ear cress).